The following is a 397-amino-acid chain: CCA-adding enzyme (397 aa).

ATP-binding residues include glycine 26 and arginine 29. Positions 26 and 29 each coordinate CTP. Mg(2+) contacts are provided by aspartate 39 and aspartate 41. Arginine 110, aspartate 153, arginine 156, arginine 159, and arginine 162 together coordinate ATP. The CTP site is built by arginine 110, aspartate 153, arginine 156, arginine 159, and arginine 162.

This sequence belongs to the tRNA nucleotidyltransferase/poly(A) polymerase family. Bacterial CCA-adding enzyme type 3 subfamily. As to quaternary structure, homodimer. Mg(2+) serves as cofactor.

The enzyme catalyses a tRNA precursor + 2 CTP + ATP = a tRNA with a 3' CCA end + 3 diphosphate. The catalysed reaction is a tRNA with a 3' CCA end + 2 CTP + ATP = a tRNA with a 3' CCACCA end + 3 diphosphate. Functionally, catalyzes the addition and repair of the essential 3'-terminal CCA sequence in tRNAs without using a nucleic acid template. Adds these three nucleotides in the order of C, C, and A to the tRNA nucleotide-73, using CTP and ATP as substrates and producing inorganic pyrophosphate. tRNA 3'-terminal CCA addition is required both for tRNA processing and repair. Also involved in tRNA surveillance by mediating tandem CCA addition to generate a CCACCA at the 3' terminus of unstable tRNAs. While stable tRNAs receive only 3'-terminal CCA, unstable tRNAs are marked with CCACCA and rapidly degraded. The protein is CCA-adding enzyme of Bacillus cereus (strain ZK / E33L).